We begin with the raw amino-acid sequence, 130 residues long: Large ribosomal subunit protein eL32 (130 aa).

It belongs to the eukaryotic ribosomal protein eL32 family.

In Pyrococcus abyssi (strain GE5 / Orsay), this protein is Large ribosomal subunit protein eL32 (rpl32e).